Consider the following 293-residue polypeptide: tRNA-cytidine(32) 2-sulfurtransferase (293 aa).

The PP-loop motif signature appears at 62–67 (SGGKDS). [4Fe-4S] cluster contacts are provided by cysteine 137, cysteine 140, and cysteine 228.

It belongs to the TtcA family. In terms of assembly, homodimer. Requires Mg(2+) as cofactor. It depends on [4Fe-4S] cluster as a cofactor.

It localises to the cytoplasm. The catalysed reaction is cytidine(32) in tRNA + S-sulfanyl-L-cysteinyl-[cysteine desulfurase] + AH2 + ATP = 2-thiocytidine(32) in tRNA + L-cysteinyl-[cysteine desulfurase] + A + AMP + diphosphate + H(+). It functions in the pathway tRNA modification. In terms of biological role, catalyzes the ATP-dependent 2-thiolation of cytidine in position 32 of tRNA, to form 2-thiocytidine (s(2)C32). The sulfur atoms are provided by the cysteine/cysteine desulfurase (IscS) system. This chain is tRNA-cytidine(32) 2-sulfurtransferase, found in Brucella suis (strain ATCC 23445 / NCTC 10510).